A 507-amino-acid polypeptide reads, in one-letter code: ATP synthase subunit alpha, chloroplastic (507 aa).

170 to 177 (GDRQTGKT) is an ATP binding site.

It belongs to the ATPase alpha/beta chains family. In terms of assembly, F-type ATPases have 2 components, CF(1) - the catalytic core - and CF(0) - the membrane proton channel. CF(1) has five subunits: alpha(3), beta(3), gamma(1), delta(1), epsilon(1). CF(0) has four main subunits: a, b, b' and c.

It localises to the plastid. The protein resides in the chloroplast thylakoid membrane. It catalyses the reaction ATP + H2O + 4 H(+)(in) = ADP + phosphate + 5 H(+)(out). In terms of biological role, produces ATP from ADP in the presence of a proton gradient across the membrane. The alpha chain is a regulatory subunit. The chain is ATP synthase subunit alpha, chloroplastic from Atropa belladonna (Belladonna).